The primary structure comprises 217 residues: Proteasome subunit beta type-9 (217 aa).

Residues 1–18 constitute a propeptide, removed in mature form; the sequence is MLGEEAEPQWISEEVKTG. The Nucleophile role is filled by Thr19.

Belongs to the peptidase T1B family. As to quaternary structure, the 26S proteasome consists of a 20S proteasome core and two 19S regulatory subunits. The 20S proteasome core is composed of 28 subunits that are arranged in four stacked rings, resulting in a barrel-shaped structure. The two end rings are each formed by seven alpha subunits, and the two central rings are each formed by seven beta subunits. The catalytic chamber with the active sites is on the inside of the barrel. Component of the immunoproteasome, where it displaces the equivalent housekeeping subunit PSMB6. In terms of processing, autocleaved. The resulting N-terminal Thr residue of the mature subunit is responsible for the nucleophile proteolytic activity.

Its subcellular location is the cytoplasm. The protein resides in the nucleus. The catalysed reaction is Cleavage of peptide bonds with very broad specificity.. Its function is as follows. The proteasome is a multicatalytic proteinase complex which is characterized by its ability to cleave peptides with Arg, Phe, Tyr, Leu, and Glu adjacent to the leaving group at neutral or slightly basic pH. The proteasome has an ATP-dependent proteolytic activity. This subunit is involved in antigen processing to generate class I binding peptides. This is Proteasome subunit beta type-9 (psmb9) from Oryzias latipes (Japanese rice fish).